Here is a 325-residue protein sequence, read N- to C-terminus: Hydroxylase/desaturase poxK (325 aa).

Residues 1–12 (MTATATPVPTVA) show a composition bias toward low complexity. Positions 1–25 (MTATATPVPTVASHAQDITLPPPPK) are disordered.

It belongs to the asaB hydroxylase/desaturase family.

Its pathway is secondary metabolite biosynthesis. Functionally, hydroxylase/desaturase; part of the gene cluster that mediates the biosynthesis of oxaleimides, cytotoxic compounds containing an unusual disubstituted succinimide moiety. The first step of the pathway is provided by the HR-PKS poxF that serves in a new mode of collaborative biosynthesis with the PKS-NRPS poxE, by providing the olefin containing amino acid substrate via the synthesis of an ACP-bound dec-4-enoate. The cytochrome P450 monooxygenase poxM-catalyzed oxidation at the alpha-position creates the enzyme-bound 2-hydroxydec-4-enoyl-ACP thioester, which may be prone to spontaneous hydrolysis to yield 2-hydroxydec-4-enoic acid due to increased electrophilicity of the carbonyl. 2-hydroxydec-4-enoic acid can then be further oxidized by poxM to yield the alpha-ketoacid 2-oxodec-4-enoicacid, which is reductively aminated by the aminotransferase poxL to yield (S,E)-2-aminodec-4-enoic acid. The Hybrid PKS-NRPS synthetase poxE then performs condensation between the octaketide product of its PKS modules and the amino group of (S,E)-2-aminodec-4-enoic acid which is activated and incorporated by the adenylation domain. The resulting aminoacyl product can be cyclized by the Diels-Alderase PoxQ and reductively released by the reductive (R) domain of poxE to yield an aldehyde intermediate. The released aldehyde is then substrate for a Knoevenagel condensation by the hydrolyase poxO followed by an oxidation at the 5-position of the pyrrolidone ring. The presence of the olefin from the amino acid building block allows for migration of the substituted allyl group to occur. This allylic transposition reaction takes place in a conjugate addition, semipinacol-like fashion to yield a succinimide intermediate. Iterative two-electron oxidations of the C7 methyl of the succinimide intermediate to the carboxylic acid can be catalyzed by one of two remaining cytochrome P450 monooxygenasess poxC or poxD to yield oxaleimide A. Subsequent oxidation yields the maleimide scaffold oxaleimide I. Both oxaleimide A and oxaleimide I can undergo oxidative modifications in the decalin ring to yield the series of products oxaleimides B to H. This chain is Hydroxylase/desaturase poxK, found in Penicillium oxalicum (strain 114-2 / CGMCC 5302) (Penicillium decumbens).